A 116-amino-acid chain; its full sequence is Iron-sulfur cluster insertion protein ErpA (116 aa).

The iron-sulfur cluster site is built by cysteine 44, cysteine 108, and cysteine 110.

This sequence belongs to the HesB/IscA family. Homodimer. It depends on iron-sulfur cluster as a cofactor.

Its function is as follows. Required for insertion of 4Fe-4S clusters for at least IspG. The chain is Iron-sulfur cluster insertion protein ErpA from Shewanella putrefaciens (strain CN-32 / ATCC BAA-453).